Here is a 177-residue protein sequence, read N- to C-terminus: Eggshell protein (177 aa).

The first 18 residues, 1 to 18 (MKQSLTLVFLVAIGYATA), serve as a signal peptide directing secretion. 5 tandem repeats follow at residues 25-41 (YSGGYGGGCYGSDCDSG), 42-59 (YGDSGYGGGCTGGDCGGG), 60-75 (YGGGYGGGCSGGDCGN), 76-91 (YGGGYGGDCNGGDCGN), and 92-112 (YGGGYGGGNGGGCSGGNCGGG). The segment at 25-112 (YSGGYGGGCY…GCSGGNCGGG (88 aa)) is 5 X approximate tandem repeats. A compositionally biased stretch (gly residues) spans 149-166 (GSGKGKGGGKGGKGGKGG). The interval 149–177 (GSGKGKGGGKGGKGGKGGTYKPSHYGGGY) is disordered.

The polypeptide is Eggshell protein (F10) (Schistosoma mansoni (Blood fluke)).